The chain runs to 195 residues: CDP-diacylglycerol--glycerol-3-phosphate 3-phosphatidyltransferase (195 aa).

Helical transmembrane passes span 7–24, 60–81, 134–150, and 157–173; these read ITVL…LFYL, FGAF…VLLV, MLAL…FTFW, and FLLI…LQYL.

The protein belongs to the CDP-alcohol phosphatidyltransferase class-I family.

The protein resides in the cell membrane. The enzyme catalyses a CDP-1,2-diacyl-sn-glycerol + sn-glycerol 3-phosphate = a 1,2-diacyl-sn-glycero-3-phospho-(1'-sn-glycero-3'-phosphate) + CMP + H(+). It functions in the pathway phospholipid metabolism; phosphatidylglycerol biosynthesis; phosphatidylglycerol from CDP-diacylglycerol: step 1/2. Functionally, this protein catalyzes the committed step to the synthesis of the acidic phospholipids. The sequence is that of CDP-diacylglycerol--glycerol-3-phosphate 3-phosphatidyltransferase (pgsA) from Pseudomonas fluorescens.